A 424-amino-acid polypeptide reads, in one-letter code: Zinc finger and BTB domain-containing protein 6 (424 aa).

The 65-residue stretch at 33–97 folds into the BTB domain; sequence CDVSIYINDT…CYTGALEVKR (65 aa). Residue S202 is modified to Phosphoserine. 4 C2H2-type zinc fingers span residues 301 to 323, 326 to 348, 354 to 376, and 382 to 405; these read HQCP…LKMH, FLCL…IRGH, FQCT…LNIH, and YKCH…TSLH. Positions 403–424 are disordered; sequence SLHGRSSGEKLPRHDLERQNLL. Residues 408-424 show a composition bias toward basic and acidic residues; the sequence is SSGEKLPRHDLERQNLL.

It localises to the nucleus. Functionally, may be involved in transcriptional regulation. The protein is Zinc finger and BTB domain-containing protein 6 (ZBTB6) of Bos taurus (Bovine).